A 384-amino-acid chain; its full sequence is 8-amino-7-oxononanoate synthase (384 aa).

Residue Arg21 coordinates substrate. Pyridoxal 5'-phosphate is bound at residue Gly108 to Phe109. His133 provides a ligand contact to substrate. Positions 179, 207, and 233 each coordinate pyridoxal 5'-phosphate. An N6-(pyridoxal phosphate)lysine modification is found at Lys236. Thr352 serves as a coordination point for substrate.

Belongs to the class-II pyridoxal-phosphate-dependent aminotransferase family. BioF subfamily. Homodimer. It depends on pyridoxal 5'-phosphate as a cofactor.

It carries out the reaction 6-carboxyhexanoyl-[ACP] + L-alanine + H(+) = (8S)-8-amino-7-oxononanoate + holo-[ACP] + CO2. Its pathway is cofactor biosynthesis; biotin biosynthesis. Its function is as follows. Catalyzes the decarboxylative condensation of pimeloyl-[acyl-carrier protein] and L-alanine to produce 8-amino-7-oxononanoate (AON), [acyl-carrier protein], and carbon dioxide. The chain is 8-amino-7-oxononanoate synthase from Enterobacter sp. (strain 638).